Here is a 238-residue protein sequence, read N- to C-terminus: 2-C-methyl-D-erythritol 4-phosphate cytidylyltransferase (238 aa).

It belongs to the IspD/TarI cytidylyltransferase family. IspD subfamily.

The catalysed reaction is 2-C-methyl-D-erythritol 4-phosphate + CTP + H(+) = 4-CDP-2-C-methyl-D-erythritol + diphosphate. It functions in the pathway isoprenoid biosynthesis; isopentenyl diphosphate biosynthesis via DXP pathway; isopentenyl diphosphate from 1-deoxy-D-xylulose 5-phosphate: step 2/6. Catalyzes the formation of 4-diphosphocytidyl-2-C-methyl-D-erythritol from CTP and 2-C-methyl-D-erythritol 4-phosphate (MEP). The polypeptide is 2-C-methyl-D-erythritol 4-phosphate cytidylyltransferase (Acinetobacter baumannii (strain ACICU)).